A 331-amino-acid chain; its full sequence is Probable 5-dehydro-4-deoxyglucarate dehydratase 2 (331 aa).

The segment at 1 to 23 (MSADTDTDTDTGTGTGPDTDTGT) is disordered. Residues 10-23 (DTGTGTGPDTDTGT) are compositionally biased toward low complexity.

It belongs to the DapA family.

The enzyme catalyses 5-dehydro-4-deoxy-D-glucarate + H(+) = 2,5-dioxopentanoate + CO2 + H2O. It functions in the pathway carbohydrate acid metabolism; D-glucarate degradation; 2,5-dioxopentanoate from D-glucarate: step 2/2. In Streptomyces avermitilis (strain ATCC 31267 / DSM 46492 / JCM 5070 / NBRC 14893 / NCIMB 12804 / NRRL 8165 / MA-4680), this protein is Probable 5-dehydro-4-deoxyglucarate dehydratase 2.